Reading from the N-terminus, the 158-residue chain is Eukaryotic translation initiation factor 5A-3 (158 aa).

Over residues 1-10 (MSDDEHHFES) the composition is skewed to basic and acidic residues. The tract at residues 1-23 (MSDDEHHFESSDAGASKTYPQQA) is disordered. At S2 the chain carries Phosphoserine. Hypusine is present on K51.

Belongs to the eIF-5A family. Post-translationally, lys-52 undergoes hypusination, a unique post-translational modification that consists in the addition of a butylamino group from spermidine to lysine side chain, leading to the formation of the unusual amino acid hypusine. eIF-5As are the only known proteins to undergo this modification, which is essential for their function. In terms of tissue distribution, expressed in the vascular tissues of roots, stems and leaves. Localized in phloem companion cells rather than sieve-tube members. Not expressed in xylem or procambium. Detected in root tips and in the chalazal tissue of fertilized ovules.

Functionally, translation factor that promotes translation elongation and termination, particularly upon ribosome stalling at specific amino acid sequence contexts. Binds between the exit (E) and peptidyl (P) site of the ribosome and promotes rescue of stalled ribosome: specifically required for efficient translation of polyproline-containing peptides as well as other motifs that stall the ribosome. Acts as a ribosome quality control (RQC) cofactor by joining the RQC complex to facilitate peptidyl transfer during CAT tailing step. Involved in supporting growth and plays a regulatory role in the response to sub-lethal osmotic and nutrient stress. In Arabidopsis thaliana (Mouse-ear cress), this protein is Eukaryotic translation initiation factor 5A-3 (ELF5A-3).